The sequence spans 156 residues: Myosin regulatory light chain, striated adductor muscle (156 aa).

Alanine 1 bears the Blocked amino end (Ala) mark. EF-hand domains lie at lysine 15–threonine 50 and aspartate 84–asparagine 119. Positions 28, 30, 32, and 39 each coordinate Ca(2+).

In molluscan muscle, calcium regulation is associated with myosin rather than with actin. Muscle myosin contains two types of light chains: the catalytic light chain, essential for ATPase activity, and the regulatory light chain, a calcium-binding protein responsible for Ca(2+) dependent binding and Ca(2+) dependent Mg-ATPase activity. This chain is Myosin regulatory light chain, striated adductor muscle, found in Chlamys nipponensis akazara (Akazara scallop).